We begin with the raw amino-acid sequence, 160 residues long: Transcriptional repressor NrdR (160 aa).

A zinc finger spans residues 3–34 (CPRCHHNNSRVIDSRQADDGRAIRRRRECENC). An ATP-cone domain is found at 49 to 139 (LLVIKKNGDR…VYRQFKDMSV (91 aa)).

It belongs to the NrdR family. The cofactor is Zn(2+).

In terms of biological role, negatively regulates transcription of bacterial ribonucleotide reductase nrd genes and operons by binding to NrdR-boxes. The protein is Transcriptional repressor NrdR of Enterococcus faecalis (strain ATCC 700802 / V583).